Consider the following 291-residue polypeptide: Pyridoxal 5'-phosphate synthase subunit PdxS (291 aa).

Residue Asp-23 coordinates D-ribose 5-phosphate. Lys-80 functions as the Schiff-base intermediate with D-ribose 5-phosphate in the catalytic mechanism. Gly-152 serves as a coordination point for D-ribose 5-phosphate. Arg-164 is a D-glyceraldehyde 3-phosphate binding site. D-ribose 5-phosphate-binding positions include Gly-213 and 234–235 (GS).

It belongs to the PdxS/SNZ family. In terms of assembly, in the presence of PdxT, forms a dodecamer of heterodimers.

The catalysed reaction is aldehydo-D-ribose 5-phosphate + D-glyceraldehyde 3-phosphate + L-glutamine = pyridoxal 5'-phosphate + L-glutamate + phosphate + 3 H2O + H(+). It participates in cofactor biosynthesis; pyridoxal 5'-phosphate biosynthesis. Its function is as follows. Catalyzes the formation of pyridoxal 5'-phosphate from ribose 5-phosphate (RBP), glyceraldehyde 3-phosphate (G3P) and ammonia. The ammonia is provided by the PdxT subunit. Can also use ribulose 5-phosphate and dihydroxyacetone phosphate as substrates, resulting from enzyme-catalyzed isomerization of RBP and G3P, respectively. The sequence is that of Pyridoxal 5'-phosphate synthase subunit PdxS from Clostridium acetobutylicum (strain ATCC 824 / DSM 792 / JCM 1419 / IAM 19013 / LMG 5710 / NBRC 13948 / NRRL B-527 / VKM B-1787 / 2291 / W).